We begin with the raw amino-acid sequence, 396 residues long: uncharacterized protein (396 aa).

The protein belongs to the NAD(P)-dependent epimerase/dehydratase family. It depends on NAD(+) as a cofactor. The cofactor is NADP(+).

Putative nucleotide sugar epimerase/dehydrogenase. This is an uncharacterized protein from Sinorhizobium fredii (strain NBRC 101917 / NGR234).